A 72-amino-acid chain; its full sequence is Small ribosomal subunit protein bS20 (72 aa).

This sequence belongs to the bacterial ribosomal protein bS20 family.

Binds directly to 16S ribosomal RNA. The sequence is that of Small ribosomal subunit protein bS20 (rpsT) from Proteus mirabilis.